Consider the following 338-residue polypeptide: Protein pelota homolog (338 aa).

Belongs to the eukaryotic release factor 1 family. Pelota subfamily. As to quaternary structure, monomer. A divalent metal cation is required as a cofactor.

Its subcellular location is the cytoplasm. In terms of biological role, may function in recognizing stalled ribosomes, interact with stem-loop structures in stalled mRNA molecules, and effect endonucleolytic cleavage of the mRNA. May play a role in the release non-functional ribosomes and degradation of damaged mRNAs. Has endoribonuclease activity. The polypeptide is Protein pelota homolog (Caldivirga maquilingensis (strain ATCC 700844 / DSM 13496 / JCM 10307 / IC-167)).